The primary structure comprises 1214 residues: Zinc finger E-box-binding homeobox 2 (1214 aa).

Residues M1–E101 are disordered. The span at C12–N24 shows a compositional bias: basic residues. The segment covering D57–V74 has biased composition (polar residues). The span at R89–H98 shows a compositional bias: basic and acidic residues. Position 142 is a phosphoserine (S142). 3 C2H2-type zinc fingers span residues L211–H234, F241–H263, and F282–H304. Residues Y310 to C334 form a C2H2-type 4; atypical zinc finger. 3 positions are modified to phosphoserine: S356, S360, and S364. An N6-acetyllysine modification is found at K377. Residue K391 forms a Glycyl lysine isopeptide (Lys-Gly) (interchain with G-Cter in SUMO); alternate linkage. K391 is covalently cross-linked (Glycyl lysine isopeptide (Lys-Gly) (interchain with G-Cter in SUMO2); alternate). Positions Q437–K487 are SMAD-MH2 binding domain. Residues K479 and K555 each participate in a glycyl lysine isopeptide (Lys-Gly) (interchain with G-Cter in SUMO2) cross-link. The segment at F581 to K605 adopts a C2H2-type 5; atypical zinc-finger fold. Glycyl lysine isopeptide (Lys-Gly) (interchain with G-Cter in SUMO2) cross-links involve residues K611 and K632. Positions G644–S703 form a DNA-binding region, homeobox; atypical. S647 bears the Phosphoserine mark. The span at N702–L715 shows a compositional bias: low complexity. 3 disordered regions span residues N702–T740, P771–E810, and A832–D857. K713 participates in a covalent cross-link: Glycyl lysine isopeptide (Lys-Gly) (interchain with G-Cter in SUMO2). Residues S731 and S780 each carry the phosphoserine modification. Composition is skewed to low complexity over residues S780–S808 and S840–E854. Phosphothreonine is present on T782. S784 carries the phosphoserine modification. K866 participates in a covalent cross-link: Glycyl lysine isopeptide (Lys-Gly) (interchain with G-Cter in SUMO); alternate. K866 is covalently cross-linked (Glycyl lysine isopeptide (Lys-Gly) (interchain with G-Cter in SUMO2); alternate). 2 C2H2-type zinc fingers span residues Y999–H1021 and H1027–H1049. A C2H2-type 8; atypical zinc finger spans residues Y1055–H1076. Residues T1117–M1214 are disordered. Phosphoserine is present on residues S1122 and S1124. Positions R1127–D1155 are enriched in basic and acidic residues. Residues G1156–S1167 are compositionally biased toward acidic residues. Basic and acidic residues-rich tracts occupy residues E1168–I1179 and G1186–H1205. S1203 carries the post-translational modification Phosphoserine.

It belongs to the delta-EF1/ZFH-1 C2H2-type zinc-finger family. As to quaternary structure, binds activated SMAD1, activated SMAD2 and activated SMAD3; binding with SMAD4 is not detected. Interacts with CBX4 and CTBP1. Post-translationally, sumoylation on Lys-391 and Lys-866 is promoted by the E3 SUMO-protein ligase CBX4, and impairs interaction with CTBP1 and transcription repression activity.

The protein resides in the nucleus. Its subcellular location is the chromosome. Functionally, transcriptional inhibitor that binds to DNA sequence 5'-CACCT-3' in different promoters. Represses transcription of E-cadherin. Represses expression of MEOX2. The chain is Zinc finger E-box-binding homeobox 2 from Homo sapiens (Human).